The chain runs to 291 residues: Short-chain dehydrogenase/reductase GME11359 (291 aa).

NADP(+) is bound by residues Leu18, Asp67, Asn96, Tyr177, Lys181, and Val209. Tyr177 functions as the Proton acceptor in the catalytic mechanism. Catalysis depends on Lys181, which acts as the Lowers pKa of active site Tyr.

It belongs to the short-chain dehydrogenases/reductases (SDR) family.

The protein operates within secondary metabolite biosynthesis. Functionally, short-chain dehydrogenase/reductase; part of the gene cluster that mediates the biosynthesis of dibenzodioxocinones such as pestalotiollide B, a novel class of inhibitors against cholesterol ester transfer protein (CEPT). The biosynthesis initiates from condensation of acetate and malonate units catalyzed by the non-reducing PKS pks8/GME11356. Pks8/GME11356 lacks a thioesterase (TE) domain, which is important to the cyclizing of the third ring of atrochrysone carboxylic acid, and the esterase GME11355 might play the role of TE and catalyzes the cyclization reaction of the C ring. The lactamase-like protein GME11357 (or other beta-lactamases in Pestalotiopsis microspora) probably hydrolyzes the thioester bond between the ACP of pks8/GME11356 and the intermediate to release atrochrysone carboxylic acid, which is spontaneously dehydrates to form endocrocin anthrone. Endocrocin anthrone is further converted to emodin via the endocrocin intermediate. Emodin is then oxidized by several enzymes such as the Baeyer-Villiger oxidase GME11358, the oxidoreductase GME11367, the short chain dehydrogenase/reductase GME11373, as well as by other oxidoreductases from the cluster, to modify the A and C rings and open the B ring, and finally yield monodictyphenone. The prenyltransferase GME11375 may catalyze the addition reaction between the C5 side chains and the carbon bone of dibenzodioxocinones. The remaining biochemical reactions to the final product dibenzodioxocinones should be methylation catalyzed by methyltransferase GME11366 and reduction and lactonization reaction catalyzed by a series of oxidordeuctases. In Pestalotiopsis microspora, this protein is Short-chain dehydrogenase/reductase GME11359.